The primary structure comprises 459 residues: Argininosuccinate lyase (459 aa).

The protein belongs to the lyase 1 family. Argininosuccinate lyase subfamily.

It is found in the cytoplasm. The catalysed reaction is 2-(N(omega)-L-arginino)succinate = fumarate + L-arginine. It participates in amino-acid biosynthesis; L-arginine biosynthesis; L-arginine from L-ornithine and carbamoyl phosphate: step 3/3. The chain is Argininosuccinate lyase from Staphylococcus aureus (strain MRSA252).